We begin with the raw amino-acid sequence, 954 residues long: Endoplasmic reticulum aminopeptidase 2 (954 aa).

The Cytoplasmic portion of the chain corresponds to 1–7 (MANSCRK). A helical; Signal-anchor for type II membrane protein transmembrane segment spans residues 8 to 28 (LIFNIYVVFYCSAVIMPQICI). Residues 29-954 (CSQFTSSPID…TLRKWLLTSI (926 aa)) are Lumenal-facing. 2 N-linked (GlcNAc...) asparagine glycosylation sites follow: N79 and N113. Substrate-binding positions include E194 and 328-332 (GAMEN). H364 provides a ligand contact to Zn(2+). Residue E365 is the Proton acceptor of the active site. Residues H368 and E387 each contribute to the Zn(2+) site. Residue N399 is glycosylated (N-linked (GlcNAc...) asparagine). C415 and C454 form a disulfide bridge. Residue N644 is glycosylated (N-linked (GlcNAc...) asparagine). A disulfide bond links C753 and C760.

The protein belongs to the peptidase M1 family. As to quaternary structure, heterodimer with ERAP1. Requires Zn(2+) as cofactor. N-glycosylated.

The protein localises to the endoplasmic reticulum membrane. Its function is as follows. Aminopeptidase that plays a central role in peptide trimming, a step required for the generation of most HLA class I-binding peptides. Peptide trimming is essential to customize longer precursor peptides to fit them to the correct length required for presentation on MHC class I molecules. Preferentially hydrolyzes the basic residues Arg and Lys. This Bos taurus (Bovine) protein is Endoplasmic reticulum aminopeptidase 2 (ERAP2).